Here is a 385-residue protein sequence, read N- to C-terminus: Queuine tRNA-ribosyltransferase (385 aa).

Asp-92 serves as the catalytic Proton acceptor. Substrate is bound by residues 92 to 96 (DSGGF), Asp-146, Gln-188, and Gly-215. Residues 246–252 (GVGHPED) are RNA binding. Asp-265 acts as the Nucleophile in catalysis. The RNA binding; important for wobble base 34 recognition stretch occupies residues 270–274 (TRTGR). Zn(2+)-binding residues include Cys-303, Cys-305, Cys-308, and His-334.

Belongs to the queuine tRNA-ribosyltransferase family. In terms of assembly, homodimer. Within each dimer, one monomer is responsible for RNA recognition and catalysis, while the other monomer binds to the replacement base PreQ1. Zn(2+) is required as a cofactor.

The catalysed reaction is 7-aminomethyl-7-carbaguanine + guanosine(34) in tRNA = 7-aminomethyl-7-carbaguanosine(34) in tRNA + guanine. It participates in tRNA modification; tRNA-queuosine biosynthesis. Catalyzes the base-exchange of a guanine (G) residue with the queuine precursor 7-aminomethyl-7-deazaguanine (PreQ1) at position 34 (anticodon wobble position) in tRNAs with GU(N) anticodons (tRNA-Asp, -Asn, -His and -Tyr). Catalysis occurs through a double-displacement mechanism. The nucleophile active site attacks the C1' of nucleotide 34 to detach the guanine base from the RNA, forming a covalent enzyme-RNA intermediate. The proton acceptor active site deprotonates the incoming PreQ1, allowing a nucleophilic attack on the C1' of the ribose to form the product. After dissociation, two additional enzymatic reactions on the tRNA convert PreQ1 to queuine (Q), resulting in the hypermodified nucleoside queuosine (7-(((4,5-cis-dihydroxy-2-cyclopenten-1-yl)amino)methyl)-7-deazaguanosine). In Thermus thermophilus (strain ATCC BAA-163 / DSM 7039 / HB27), this protein is Queuine tRNA-ribosyltransferase.